Consider the following 458-residue polypeptide: Phosphoglucosamine mutase (458 aa).

The active-site Phosphoserine intermediate is Ser-106. Residues Ser-106, Asp-247, Asp-249, and Asp-251 each contribute to the Mg(2+) site. Ser-106 is subject to Phosphoserine.

This sequence belongs to the phosphohexose mutase family. Mg(2+) is required as a cofactor. In terms of processing, activated by phosphorylation.

The catalysed reaction is alpha-D-glucosamine 1-phosphate = D-glucosamine 6-phosphate. Functionally, catalyzes the conversion of glucosamine-6-phosphate to glucosamine-1-phosphate. The sequence is that of Phosphoglucosamine mutase from Chlamydia caviae (strain ATCC VR-813 / DSM 19441 / 03DC25 / GPIC) (Chlamydophila caviae).